The primary structure comprises 597 residues: Elongation factor 4 (597 aa).

Residues 2-184 (QHIRNFSIIA…SIVARVPPPK (183 aa)) enclose the tr-type G domain. GTP-binding positions include 14–19 (DHGKST) and 131–134 (NKMD).

Belongs to the TRAFAC class translation factor GTPase superfamily. Classic translation factor GTPase family. LepA subfamily.

It is found in the cell inner membrane. It catalyses the reaction GTP + H2O = GDP + phosphate + H(+). Required for accurate and efficient protein synthesis under certain stress conditions. May act as a fidelity factor of the translation reaction, by catalyzing a one-codon backward translocation of tRNAs on improperly translocated ribosomes. Back-translocation proceeds from a post-translocation (POST) complex to a pre-translocation (PRE) complex, thus giving elongation factor G a second chance to translocate the tRNAs correctly. Binds to ribosomes in a GTP-dependent manner. The sequence is that of Elongation factor 4 from Bordetella bronchiseptica (strain ATCC BAA-588 / NCTC 13252 / RB50) (Alcaligenes bronchisepticus).